A 69-amino-acid polypeptide reads, in one-letter code: DNA-directed RNA polymerase subunit omega (69 aa).

It belongs to the RNA polymerase subunit omega family. As to quaternary structure, the RNAP catalytic core consists of 2 alpha, 1 beta, 1 beta' and 1 omega subunit. When a sigma factor is associated with the core the holoenzyme is formed, which can initiate transcription.

It catalyses the reaction RNA(n) + a ribonucleoside 5'-triphosphate = RNA(n+1) + diphosphate. Promotes RNA polymerase assembly. Latches the N- and C-terminal regions of the beta' subunit thereby facilitating its interaction with the beta and alpha subunits. The polypeptide is DNA-directed RNA polymerase subunit omega (Exiguobacterium sp. (strain ATCC BAA-1283 / AT1b)).